The sequence spans 71 residues: SRY-related protein LG28 (71 aa).

A DNA-binding region (HMG box) is located at residues 1–68 (VKRPMNAFMV…KHMADYPDYK (68 aa)).

The protein resides in the nucleus. The chain is SRY-related protein LG28 from Eublepharis macularius (Leopard gecko).